Consider the following 491-residue polypeptide: E3 ubiquitin-protein ligase Hakai (491 aa).

Positions 1 to 61 are disordered; that stretch reads MDHTDNELQG…PAKAPPGDEE (61 aa). An RING-type zinc finger spans residues 109–149; sequence CDKCGLPIKIYGRMIPCKHVFCYDCAILHEKKGDKMCPGCS. Positions 148–206 are HYB domain; the sequence is CSDPVQRIEQCTRGSLFMCSIVQGCKRTYLSQRDLQAHINHRHMRAGKPVTRASLENVH. The C2H2-type zinc-finger motif lies at 164–190; that stretch reads FMCSIVQGCKRTYLSQRDLQAHINHRH. A phosphoserine mark is found at S201, S285, and S290. Residues 255-491 form a disordered region; sequence QPHEDIRAPP…DQTRYRPYYQ (237 aa). Pro residues-rich tracts occupy residues 342–359, 372–389, and 399–423; these read APPP…PHPP, APPP…PPPG, and MNHP…PPHH. Positions 427 to 442 are enriched in polar residues; the sequence is NSLPQFTEDQGTLSPP. A compositionally biased stretch (pro residues) spans 457–478; sequence PRGPPPPPRLQGPPSQTPLPGP.

The protein belongs to the Hakai family. As to quaternary structure, homodimer. Interacts with tyrosine-phosphorylated SRC substrates. Component of the WMM complex, a N6-methyltransferase complex composed of a catalytic subcomplex, named MAC, and of an associated subcomplex, named MACOM. The MAC subcomplex is composed of METTL3 and METTL14. The MACOM subcomplex is composed of WTAP, ZC3H13, CBLL1/HAKAI, VIRMA, and, in some cases of RBM15 (RBM15 or RBM15B). Also a component of a MACOM-like complex, named WTAP complex, composed of WTAP, ZC3H13, CBLL1, VIRMA, RBM15, BCLAF1 and THRAP3. In terms of processing, phosphorylated on tyrosine residues.

Its subcellular location is the nucleus speckle. It localises to the nucleus. It is found in the nucleoplasm. The protein localises to the cytoplasm. It catalyses the reaction S-ubiquitinyl-[E2 ubiquitin-conjugating enzyme]-L-cysteine + [acceptor protein]-L-lysine = [E2 ubiquitin-conjugating enzyme]-L-cysteine + N(6)-ubiquitinyl-[acceptor protein]-L-lysine.. Its pathway is protein modification; protein ubiquitination. Its function is as follows. E3 ubiquitin-protein ligase that mediates ubiquitination of several tyrosine-phosphorylated Src substrates, including CDH1, CTTN and DOK1. Targets CDH1 for endocytosis and degradation. Associated component of the WMM complex, a complex that mediates N6-methyladenosine (m6A) methylation of RNAs, a modification that plays a role in the efficiency of mRNA splicing and RNA processing. Its function in the WMM complex is unknown. This Homo sapiens (Human) protein is E3 ubiquitin-protein ligase Hakai.